A 1028-amino-acid chain; its full sequence is MRLLWKLVILLPLINSCAGESRFTRPIFIQEPQDVIFPLDLSRSEIILSCTASGYPSPHYRWKQNGTDIDFSMTYHYRLDGGSLAISSPRTDQDIGIYQCLATNPVGTILSRKAKLQFAYIEDFETKSRSTVSVREGQGVVLLCGPPPHFGELSYDWTFNDNPLYVQEDKRRFVSQNTGNLYIAKVEPSDVGNYTCFVTNKEAHRSVQGPPTPLVQRTDGVMGEYEPKIEVRFPETIQAAKDSSVKLECFALGNPVPDISWRRLDGSPMPGKVKYSNSQATLEIPKFQQEDEGFYECVAGNLRGRNLAKGQLIFYAPPEWEQKIQNTYLSIYDSLFWECKASGNPNPSYTWLKNGERLNTEERIQTENGTLIITMLNVSDSGIYQCAAENKYQTIYANAELRVLASAPDFSKNPIKKISVVQVGGDISIECKPNAFPKASISWKRGTENLKQSKRVFFLEDGSLKICNVTRSDAGSYTCVATNQFGNGKSSGSLIVKERTVITVPPSKMDVTVGESIVLPCQVSHDPTMEVLFVWYFNGDVIDLKKGVAHFERIGGESVGDLMIRNIQLGHSGKYLCTVQTTLERLSAVADIIVRGPPGPPEDVKVEHISSTTSQLSWRPGPDNNSPIQIFTIQTRTPFSVGWQAVATVPEILNGQTYNATVIGLSPWVEYEFRVVAGNNIGIGEPSKPSELLRTKASIPNVAPVNINGGGGSRSELVITWEPIPEELQNGEGFGYIIMFRPVGSTTWMKEKVALVESSKFIYRNESIMPLSPFEVKVGVYNNEGEGSLSTVSIVYSGEDEPRLAPRGTSVQSFSASDMEVSWNAIAWNRNTGRVLGYEVLYWTDNSKESMIGKIRVSGNVTTKNITGLRANTIYFASVRAYNTAGTGPSSPPVNVTTKKSPPSQPPANIAWKLSNSKLCLNWEHVKTMENESEVLGYKILYRQNRQSKTHVLETNNTSAELLVPFEEDYLIEIRTVSDGGDGSSSEEIRIPKMSSLSSVGVQILKPSTQFLTMVGFFYCFVIQPLSR.

The signal sequence occupies residues 1-19 (MRLLWKLVILLPLINSCAG). Ig-like C2-type domains lie at 32-117 (PQDV…AKLQ), 122-208 (EDFE…RSVQ), 227-308 (PKIE…RNLA), 318-402 (PEWE…AELR), 408-495 (PDFS…GSLI), and 499-587 (RTVI…ERLS). Disulfide bonds link cysteine 50–cysteine 100, cysteine 144–cysteine 196, cysteine 249–cysteine 297, cysteine 339–cysteine 386, cysteine 431–cysteine 479, and cysteine 521–cysteine 577. N-linked (GlcNAc...) asparagine glycosylation is found at asparagine 65 and asparagine 193. 3 N-linked (GlcNAc...) asparagine glycosylation sites follow: asparagine 368, asparagine 377, and asparagine 468. Fibronectin type-III domains are found at residues 600–698 (PPED…TKAS), 703–800 (APVN…SGED), 805–901 (APRG…TKKS), and 902–996 (PPSQ…KMSS). Asparagine 659, asparagine 765, asparagine 860, and asparagine 865 each carry an N-linked (GlcNAc...) asparagine glycan. Residue tyrosine 882 is modified to Phosphotyrosine. Residues 887–902 (TGPSSPPVNVTTKKSP) show a composition bias toward polar residues. Residues 887-908 (TGPSSPPVNVTTKKSPPSQPPA) are disordered. 4 N-linked (GlcNAc...) asparagine glycosylation sites follow: asparagine 895, asparagine 931, asparagine 956, and asparagine 957. Serine 999 carries the GPI-anchor amidated serine lipid modification. A propeptide spans 1000-1028 (VGVQILKPSTQFLTMVGFFYCFVIQPLSR) (removed in mature form).

It belongs to the immunoglobulin superfamily. Contactin family. As to quaternary structure, interacts with PTPRG. Specifically expressed in neuronal cells. In brain, it is expressed in spinal cord, cerebrum and cerebellum. At 17 dpc, it is expressed in hippocampus, cerebellum, and the brain stem. Strongly expressed after birth with a maximum level between P1 and P21, which corresponds to the time frame of oligodendrogliogenesis.

It is found in the cell membrane. Contactins mediate cell surface interactions during nervous system development. Participates in oligodendrocytes generation by acting as a ligand of NOTCH1. Its association with NOTCH1 promotes NOTCH1 activation through the released notch intracellular domain (NICD) and subsequent translocation to the nucleus. May be involved in motor coordination. The polypeptide is Contactin-6 (Cntn6) (Rattus norvegicus (Rat)).